The following is a 294-amino-acid chain: 4-hydroxy-tetrahydrodipicolinate synthase (294 aa).

Threonine 47 is a binding site for pyruvate. Tyrosine 135 (proton donor/acceptor) is an active-site residue. The active-site Schiff-base intermediate with substrate is lysine 163. Residue isoleucine 206 participates in pyruvate binding.

This sequence belongs to the DapA family. Homodimer.

It is found in the cytoplasm. The catalysed reaction is L-aspartate 4-semialdehyde + pyruvate = (2S,4S)-4-hydroxy-2,3,4,5-tetrahydrodipicolinate + H2O + H(+). It participates in amino-acid biosynthesis; L-lysine biosynthesis via DAP pathway; (S)-tetrahydrodipicolinate from L-aspartate: step 3/4. Its function is as follows. Catalyzes the condensation of (S)-aspartate-beta-semialdehyde [(S)-ASA] and pyruvate to 4-hydroxy-tetrahydrodipicolinate (HTPA). This chain is 4-hydroxy-tetrahydrodipicolinate synthase, found in Staphylococcus epidermidis (strain ATCC 35984 / DSM 28319 / BCRC 17069 / CCUG 31568 / BM 3577 / RP62A).